Reading from the N-terminus, the 186-residue chain is ATP synthase subunit delta (186 aa).

Belongs to the ATPase delta chain family. In terms of assembly, F-type ATPases have 2 components, F(1) - the catalytic core - and F(0) - the membrane proton channel. F(1) has five subunits: alpha(3), beta(3), gamma(1), delta(1), epsilon(1). CF(0) has four main subunits: a(1), b(1), b'(1) and c(10-14). The alpha and beta chains form an alternating ring which encloses part of the gamma chain. F(1) is attached to F(0) by a central stalk formed by the gamma and epsilon chains, while a peripheral stalk is formed by the delta, b and b' chains.

It is found in the cell inner membrane. Functionally, f(1)F(0) ATP synthase produces ATP from ADP in the presence of a proton or sodium gradient. F-type ATPases consist of two structural domains, F(1) containing the extramembraneous catalytic core and F(0) containing the membrane proton channel, linked together by a central stalk and a peripheral stalk. During catalysis, ATP synthesis in the catalytic domain of F(1) is coupled via a rotary mechanism of the central stalk subunits to proton translocation. In terms of biological role, this protein is part of the stalk that links CF(0) to CF(1). It either transmits conformational changes from CF(0) to CF(1) or is implicated in proton conduction. The chain is ATP synthase subunit delta from Rhodopseudomonas palustris (strain HaA2).